Consider the following 178-residue polypeptide: Large ribosomal subunit protein uL6 (178 aa).

This sequence belongs to the universal ribosomal protein uL6 family. In terms of assembly, part of the 50S ribosomal subunit.

Its function is as follows. This protein binds to the 23S rRNA, and is important in its secondary structure. It is located near the subunit interface in the base of the L7/L12 stalk, and near the tRNA binding site of the peptidyltransferase center. The protein is Large ribosomal subunit protein uL6 of Francisella tularensis subsp. mediasiatica (strain FSC147).